The primary structure comprises 360 residues: MATVLAIETSCDETAAAVVKKRHILSNIVASQIDIHRPYGGVVPEVASRHHVESINDVVSEALSQAQIDWPDIDGIAVTCAPGLVGALLVGLTAAKTLVMLHNKPLIGVHHLEGHIHASYLQNPDLASPFLCLLVSGGHTSLIKAEDCGLYRTLGQTRDDAAGEAFDKVARLLDLGYPGGPAIDRIAKLGNPKAFALPEGKISLPEGGFHPYDTSFSGLKTAVLRLVESFRLRGEDVPVADIAASFQQTVAQALTRRAIKCALDYGLSTIAVGGGVAANSALRQQLLTAAEDKKLQVLFPPLSLCTDNAAMIACAGAEHLDRGHTSALTLAALSRMPISKVMELYPGSSPMHPPLELDAE.

His111 and His115 together coordinate Fe cation. Residues 134-138 (LVSGG), Asp167, Gly180, Asp184, and Asn279 contribute to the substrate site. Asp307 contacts Fe cation.

This sequence belongs to the KAE1 / TsaD family. Fe(2+) serves as cofactor.

The protein localises to the cytoplasm. It catalyses the reaction L-threonylcarbamoyladenylate + adenosine(37) in tRNA = N(6)-L-threonylcarbamoyladenosine(37) in tRNA + AMP + H(+). Its function is as follows. Required for the formation of a threonylcarbamoyl group on adenosine at position 37 (t(6)A37) in tRNAs that read codons beginning with adenine. Is involved in the transfer of the threonylcarbamoyl moiety of threonylcarbamoyl-AMP (TC-AMP) to the N6 group of A37, together with TsaE and TsaB. TsaD likely plays a direct catalytic role in this reaction. The sequence is that of tRNA N6-adenosine threonylcarbamoyltransferase from Acaryochloris marina (strain MBIC 11017).